The chain runs to 345 residues: Trace amine-associated receptor 6 (345 aa).

Topologically, residues 1–32 (MGSNSSPPAVLQLCYENVNGSCVKTPYSPGPR) are extracellular. Asparagine 19 carries an N-linked (GlcNAc...) asparagine glycan. Intrachain disulfides connect cysteine 22-cysteine 186 and cysteine 105-cysteine 190. Residues 33–53 (VLLYAVFGFGAVLAVFGNLLV) form a helical membrane-spanning segment. Residues 54-68 (MISILHFKQLHSPTN) lie on the Cytoplasmic side of the membrane. A helical transmembrane segment spans residues 69-89 (FLIASLACADFWVGVSVMPFS). The Extracellular segment spans residues 90–107 (MVRSIESCWYFGRSFCTF). Residues 108–128 (HTCCDVAFCYSSLFHLSFISI) form a helical membrane-spanning segment. At 129–147 (DRYIAVTDPLVYPTKFTVS) the chain is on the cytoplasmic side. A helical transmembrane segment spans residues 148 to 168 (VSGICISISWILPLAYSGAVF). Over 169-202 (YTGVYADGLEEVSDAVNCVGGCQVVVNQNWVLID) the chain is Extracellular. Residues 203–223 (FLSFLIPTLVMIILYGNIFLV) form a helical membrane-spanning segment. At 224–259 (ARQQAKKIETVGNKAESSSESYKARVARRERKAAKT) the chain is on the cytoplasmic side. A helical membrane pass occupies residues 260-276 (LGITVVAFMISWLPYSI). Over 277-282 (DSLVDA) the chain is Extracellular. A helical transmembrane segment spans residues 283 to 302 (FMGFITPAYIYEICVWCAYY). The Cytoplasmic portion of the chain corresponds to 303-345 (NSAMNPLIYALFYPWFKKAIKVIMSGQVFKNSSATMNLFSEQI).

The protein belongs to the G-protein coupled receptor 1 family.

It localises to the cell membrane. Functionally, olfactory receptor specific for trace amines, such as beta-phenylethylamine (beta-PEA). Trace amine compounds are enriched in animal body fluids and act on trace amine-associated receptors (TAARs) to elicit both intraspecific and interspecific innate behaviors. Beta-PEA-binding causes a conformation change that triggers signaling via G(s)-class of G alpha proteins (GNAL or GNAS). This chain is Trace amine-associated receptor 6 (Taar6), found in Rattus norvegicus (Rat).